Consider the following 540-residue polypeptide: GMP synthase [glutamine-hydrolyzing] (540 aa).

The 191-residue stretch at isoleucine 26–threonine 216 folds into the Glutamine amidotransferase type-1 domain. Cysteine 103 functions as the Nucleophile in the catalytic mechanism. Residues histidine 190 and glutamate 192 contribute to the active site. Residues tryptophan 217–arginine 415 enclose the GMPS ATP-PPase domain. Serine 244 to serine 250 contacts ATP.

Homodimer.

The enzyme catalyses XMP + L-glutamine + ATP + H2O = GMP + L-glutamate + AMP + diphosphate + 2 H(+). It participates in purine metabolism; GMP biosynthesis; GMP from XMP (L-Gln route): step 1/1. Functionally, catalyzes the synthesis of GMP from XMP. The chain is GMP synthase [glutamine-hydrolyzing] from Trichormus variabilis (strain ATCC 29413 / PCC 7937) (Anabaena variabilis).